Reading from the N-terminus, the 237-residue chain is tRNA(His) guanylyltransferase (237 aa).

Mg(2+)-binding residues include aspartate 29, glycine 30, and aspartate 77. Residues 29 to 34 (DGKHFH) and 76 to 77 (SD) contribute to the GTP site.

It belongs to the tRNA(His) guanylyltransferase family. The cofactor is Mg(2+).

The catalysed reaction is a 5'-end ribonucleotide-tRNA(His) + GTP + ATP + H2O = a 5'-end phospho-guanosine-ribonucleotide-tRNA(His) + AMP + 2 diphosphate + H(+). Functionally, adds a GMP to the 5'-end of tRNA(His) after transcription and RNase P cleavage. The sequence is that of tRNA(His) guanylyltransferase (THG1) from Eremothecium gossypii (strain ATCC 10895 / CBS 109.51 / FGSC 9923 / NRRL Y-1056) (Yeast).